A 260-amino-acid chain; its full sequence is Putative methylesterase 19 (260 aa).

Ser-81 functions as the Acyl-ester intermediate in the catalytic mechanism. Catalysis depends on charge relay system residues Asp-210 and His-238.

The protein belongs to the AB hydrolase superfamily. Methylesterase family.

Functionally, putative methylesterase. This Arabidopsis thaliana (Mouse-ear cress) protein is Putative methylesterase 19.